The chain runs to 238 residues: Gas vesicle protein F (238 aa).

This sequence belongs to the gas vesicle GvpF/GvpL family. Binds GvpA.

The protein resides in the gas vesicle. Functionally, a minor component of the gas vesicle, may be involved in preventing GvpA aggregation during gas vesicle nucleation. Gas vesicles are hollow, gas filled proteinaceous nanostructures found in some microorganisms. It is not clear what function gas vesicles perform in soil bacteria. The chain is Gas vesicle protein F from Streptomyces sp. (strain CB03234).